The primary structure comprises 353 residues: Zinc transporter 5 (353 aa).

A signal peptide spans 1 to 27; it reads MATAAMTKVFVLLFLVAACYLPAHAAA. Over 28 to 48 the chain is Extracellular; sequence AECDCATDTAGRDKAQALRLK. A helical transmembrane segment spans residues 49-69; sequence VIAIFCILAGSTVGAALPSLG. The Cytoplasmic portion of the chain corresponds to 70–86; the sequence is GRFPAIQPETDVFLSVK. A helical membrane pass occupies residues 87–107; that stretch reads AFAGGVILATGLVHILPAAFE. The Extracellular portion of the chain corresponds to 108–121; it reads ALSSPCLVGGPWKR. The chain crosses the membrane as a helical span at residues 122–142; sequence FPFAGMVAMVSAIGTLIVDTV. The Cytoplasmic portion of the chain corresponds to 143–198; it reads ATGYFHRTDAKRKAAAVADEPADDLEASDEHSHGHAHGMSVMSVAPAGEEDLVRHR. Residues 199–219 form a helical membrane-spanning segment; the sequence is VISQVLELGVVVHSLIIGMSL. Over 220-230 the chain is Extracellular; that stretch reads GASDFPSTVRP. A helical membrane pass occupies residues 231–251; the sequence is LVPALTFHQFFEGIGLGGCIV. Topologically, residues 252 to 260 are cytoplasmic; the sequence is QAKFRVRSV. The chain crosses the membrane as a helical span at residues 261–281; it reads VTMALFFSLTTPAGIVVGIGI. The Extracellular portion of the chain corresponds to 282 to 292; the sequence is SSVYDANSPTA. The helical transmembrane segment at 293-313 threads the bilayer; it reads LVVQGLLEAAAAGILVYMALV. Residues 314-332 are Cytoplasmic-facing; the sequence is DILAEDFMKTKVQRRGRLQ. A helical transmembrane segment spans residues 333 to 353; that stretch reads LAMNVALLLGAGLMSMIAIWA.

It belongs to the ZIP transporter (TC 2.A.5) family.

The protein resides in the cell membrane. Functionally, zinc transporter that mediates zinc uptake from the rhizosphere and may be responsible for the translocation of zinc within the plant. This is Zinc transporter 5 (ZIP5) from Oryza sativa subsp. japonica (Rice).